Reading from the N-terminus, the 392-residue chain is 8-amino-7-oxononanoate synthase (392 aa).

Arg-26 is a substrate binding site. 112 to 113 (GF) contributes to the pyridoxal 5'-phosphate binding site. His-137 provides a ligand contact to substrate. 3 residues coordinate pyridoxal 5'-phosphate: Ser-187, His-215, and Thr-241. Lys-244 is modified (N6-(pyridoxal phosphate)lysine). Thr-357 provides a ligand contact to substrate.

It belongs to the class-II pyridoxal-phosphate-dependent aminotransferase family. BioF subfamily. Homodimer. It depends on pyridoxal 5'-phosphate as a cofactor.

The catalysed reaction is 6-carboxyhexanoyl-[ACP] + L-alanine + H(+) = (8S)-8-amino-7-oxononanoate + holo-[ACP] + CO2. It functions in the pathway cofactor biosynthesis; biotin biosynthesis. Catalyzes the decarboxylative condensation of pimeloyl-[acyl-carrier protein] and L-alanine to produce 8-amino-7-oxononanoate (AON), [acyl-carrier protein], and carbon dioxide. The polypeptide is 8-amino-7-oxononanoate synthase (Photobacterium profundum (strain SS9)).